Consider the following 273-residue polypeptide: MSPKRDGLGTGDGLHSQVLQEQVSTGDNLHECDSQGPSKDTLVREGKTYKCKECGSVFNKNSLLVRHQQIHTGVKPYECQECGKAFPEKVDFVRPMRIHTGEKPCKCVECGKVFNRRSHLLCYRQIHTGEKPYECSECGKTFSYHSVFIQHRVTHTGEKLFGCKECGKTFYYNSSLTRHMKIHTGEKPCKCSECGKTFTYRSVFFRHSMTHTAGKPYECKECGKGFYYSYSLTRHTRSHTGEKPYECLEHRKDFGYHSAFAQQSKIHSGGKNL.

C2H2-type zinc fingers lie at residues 49-71 (YKCK…QQIH) and 77-99 (YECQ…MRIH). Residues 105–127 (CKCVECGKVFNRRSHLLCYRQIH) form a C2H2-type 3; atypical zinc finger. 4 C2H2-type zinc fingers span residues 133 to 155 (YECS…RVTH), 161 to 183 (FGCK…MKIH), 189 to 211 (CKCS…SMTH), and 217 to 239 (YECK…TRSH).

Belongs to the krueppel C2H2-type zinc-finger protein family.

The protein localises to the nucleus. May be involved in transcriptional regulation. The polypeptide is Zinc finger protein 80 (ZNF80) (Homo sapiens (Human)).